The primary structure comprises 329 residues: uncharacterized protein (329 aa).

This is an uncharacterized protein from Bacillus subtilis (strain 168).